The following is a 254-amino-acid chain: Phosphoribosylaminoimidazole-succinocarboxamide synthase (254 aa).

The protein belongs to the SAICAR synthetase family.

It carries out the reaction 5-amino-1-(5-phospho-D-ribosyl)imidazole-4-carboxylate + L-aspartate + ATP = (2S)-2-[5-amino-1-(5-phospho-beta-D-ribosyl)imidazole-4-carboxamido]succinate + ADP + phosphate + 2 H(+). The protein operates within purine metabolism; IMP biosynthesis via de novo pathway; 5-amino-1-(5-phospho-D-ribosyl)imidazole-4-carboxamide from 5-amino-1-(5-phospho-D-ribosyl)imidazole-4-carboxylate: step 1/2. The chain is Phosphoribosylaminoimidazole-succinocarboxamide synthase from Brucella abortus (strain S19).